The following is a 199-amino-acid chain: GTP cyclohydrolase-2 (199 aa).

52-56 (RMHSE) contributes to the GTP binding site. Residues cysteine 57, cysteine 68, and cysteine 70 each contribute to the Zn(2+) site. GTP contacts are provided by residues glutamine 73, 94-96 (EGR), and threonine 116. Aspartate 128 (proton acceptor) is an active-site residue. Arginine 130 (nucleophile) is an active-site residue. The GTP site is built by threonine 151 and lysine 156.

This sequence belongs to the GTP cyclohydrolase II family. Requires Zn(2+) as cofactor.

The enzyme catalyses GTP + 4 H2O = 2,5-diamino-6-hydroxy-4-(5-phosphoribosylamino)-pyrimidine + formate + 2 phosphate + 3 H(+). The protein operates within cofactor biosynthesis; riboflavin biosynthesis; 5-amino-6-(D-ribitylamino)uracil from GTP: step 1/4. Catalyzes the conversion of GTP to 2,5-diamino-6-ribosylamino-4(3H)-pyrimidinone 5'-phosphate (DARP), formate and pyrophosphate. The protein is GTP cyclohydrolase-2 of Aliivibrio fischeri (strain MJ11) (Vibrio fischeri).